Consider the following 795-residue polypeptide: MDILLNLINYSNNLKSQIKNNNNPENGSIVVLLSNISNDFEEIKDLQYKQQQQQQQNPNNIIKTFSNTIFKRIKHFISISINFGIKTIATKLLLIKKRKNITSSTSTSTCTTITIDKIINTILFENLNIIIKLLSLIEMIIIREYNYCKNTITQQQQQPILIWIGNSTNNNNKNKKIKIINLESIEKSINYLKTIKQQNKNTRIIIDNDIPLDHIKQLLSQFNNFPINIICFKNKCKNNEKEKKEEEEDHDHDHDDKKKEKEDKEKEEEEEEEDSNDDFEINDYITFLSIDFNNHFISLSNTEILYDYFINSMNYKPKFITTTTTTTTTTVNGSKNSSNTTTPITTKDDIDLDSDGEKKESDDDDDDDLTDEDTSQHNEIYSTSPKVSHSTFCQSSPTLLDLDLQQQQQQQQQQNDKIGGQQEKQITPNRSYTIRNMKPVSNQRYYSTPNKTVIINQQQQQQQQQQSSTSPSISPSSSNIKSEPNFARIDYKTSMFISNKPVAITTGKVATTQIHLRDALDNPVPTNLTSSNPSGFGPISSSPLHLTLLGPTNEILPFYCFVVGSGIFGISFFPTIHGIYTLSASLDYNNNNNNNNNNNNNSNNNNGIKKDLSIKNSPTIFKSTADGIISPNEIRSLHNSNEKKRKLPLLDFESTSNDSIDLLDFIIDSVDKNNNNNNNNNNNNNNNNNNNNNNNNNNNNNNNNNNNNNNNNNNNNNNNKENHNQNQNEIENENKNENENENENDKNGIIFINQNLNKEFNESSPEMSPTLQVEDDSNISAVNNDSSEIEATLAI.

Positions 228–280 (NIICFKNKCKNNEKEKKEEEEDHDHDHDDKKKEKEDKEKEEEEEEEDSNDDFE) form a coiled coil. Disordered stretches follow at residues 242-278 (EKKEEEEDHDHDHDDKKKEKEDKEKEEEEEEEDSNDD), 326-430 (TTTT…TPNR), 455-484 (INQQQQQQQQQQSSTSPSISPSSSNIKSEP), and 673-743 (NNNN…NENE). Basic and acidic residues predominate over residues 251–264 (DHDHDDKKKEKEDK). Acidic residues predominate over residues 265–278 (EKEEEEEEEDSNDD). Residues 326 to 345 (TTTTTVNGSKNSSNTTTPIT) are compositionally biased toward low complexity. Over residues 362 to 373 (DDDDDDDLTDED) the composition is skewed to acidic residues. A compositionally biased stretch (polar residues) spans 377–398 (HNEIYSTSPKVSHSTFCQSSPT). 3 stretches are compositionally biased toward low complexity: residues 399 to 414 (LLDLDLQQQQQQQQQQ), 455 to 480 (INQQQQQQQQQQSSTSPSISPSSSNI), and 673 to 729 (NNNN…NQNE). Positions 732-743 (NENKNENENENE) are enriched in basic and acidic residues.

This is an uncharacterized protein from Dictyostelium discoideum (Social amoeba).